The sequence spans 364 residues: tRNA/tmRNA (uracil-C(5))-methyltransferase (364 aa).

S-adenosyl-L-methionine is bound by residues Gln-189, Tyr-216, Asn-221, Glu-237, and Asp-297. Cys-322 (nucleophile) is an active-site residue. Glu-356 acts as the Proton acceptor in catalysis.

Belongs to the class I-like SAM-binding methyltransferase superfamily. RNA M5U methyltransferase family. TrmA subfamily.

It catalyses the reaction uridine(54) in tRNA + S-adenosyl-L-methionine = 5-methyluridine(54) in tRNA + S-adenosyl-L-homocysteine + H(+). The catalysed reaction is uridine(341) in tmRNA + S-adenosyl-L-methionine = 5-methyluridine(341) in tmRNA + S-adenosyl-L-homocysteine + H(+). Dual-specificity methyltransferase that catalyzes the formation of 5-methyluridine at position 54 (m5U54) in all tRNAs, and that of position 341 (m5U341) in tmRNA (transfer-mRNA). The sequence is that of tRNA/tmRNA (uracil-C(5))-methyltransferase from Campylobacter curvus (strain 525.92).